Consider the following 296-residue polypeptide: Giardin subunit alpha-2 (296 aa).

4 Annexin repeats span residues P2–F71, D73–W143, G153–A223, and G226–R293.

The protein belongs to the annexin family. Giardin subunit alpha subfamily.

It localises to the cytoplasm. The protein resides in the cytoskeleton. Giardins are involved in parasite attachment to the intestinal mucosa and in the cytoskeletal disassembly and reassembly that marks the transition from infectious trophozoite to transmissible cyst. They may interact with other cytoskeletal proteins such as microtubules in the microribbons or crossbridges, to maintain the integrity of the ventral disk. The chain is Giardin subunit alpha-2 from Giardia intestinalis (Giardia lamblia).